The chain runs to 415 residues: MFS-type transporter FVEG_12626 (415 aa).

Residues 1 to 18 (MDPDTEQMRVEKPNHEQP) show a composition bias toward basic and acidic residues. The interval 1–22 (MDPDTEQMRVEKPNHEQPKPNT) is disordered. The next 6 helical transmembrane spans lie at 27 to 47 (GGFKAWSVVVGAFCGLFVGVF), 63 to 83 (TVSWIPAISMFIMFITGPFVG), 93 to 113 (YLLLAGTLLHVFGLMMASISS), 118 to 138 (YILSQAICSPLGAAMVLYPSF), 151 to 171 (LALGITASGSSLGGTILPIVV), and 178 to 198 (IGFGWTMRACAFLLLGLLLVT). The N-linked (GlcNAc...) asparagine glycan is linked to asparagine 199. The next 6 helical transmembrane spans lie at 227 to 247 (FILTSLAGFFYSMGMFIPITF), 264 to 284 (YLVSIFNASSGIGRILPGYIA), 290 to 310 (FNVSIAAATLSTIFMLGLWLP), 318 to 338 (IAFAALFGFSSGTYTAISPAL), 354 to 374 (TMYAFMSVAALTGSPIGGALI), and 386 to 406 (VFAGCMLGAGTVFYVLARLYI).

It belongs to the major facilitator superfamily. Monocarboxylate porter (TC 2.A.1.13) family.

It is found in the membrane. MFS-type transporter; part of the Fusarium detoxification of benzoxazolinone cluster 2 (FDB2) involved in the degradation of benzoxazolinones produced by the host plant. Maize, wheat, and rye produce the 2 benzoxazinone phytoanticipins 2,4-dihy-droxy-7-methoxy-1,4-benzoxazin-3-one (DIMBOA) and 2,4-dihydroxy-1,4-benzoxazin-3-one (DIBOA) that, due to their inherent instability once released, spontaneously degrade to the more stable corresponding benzoxazolinones, 6-methoxy-2-benzoxazolinone (MBOA) and 2-benzoxazolinone (BOA), respectively. This is MFS-type transporter FVEG_12626 from Gibberella moniliformis (strain M3125 / FGSC 7600) (Maize ear and stalk rot fungus).